Consider the following 433-residue polypeptide: D-amino acid dehydrogenase (433 aa).

Residue 3–17 coordinates FAD; the sequence is VLVLGSGVIGTTSAY.

Belongs to the DadA oxidoreductase family. Requires FAD as cofactor.

The enzyme catalyses a D-alpha-amino acid + A + H2O = a 2-oxocarboxylate + AH2 + NH4(+). Oxidative deamination of D-amino acids. The sequence is that of D-amino acid dehydrogenase from Pseudomonas syringae pv. tomato (strain ATCC BAA-871 / DC3000).